Reading from the N-terminus, the 279-residue chain is Proline-rich protein 23D1 (279 aa).

2 disordered regions span residues 1 to 60 (MYGY…PHLN) and 247 to 270 (LRPMPPSPSPGPQVYHRVHHRPPS). Residues 15-33 (TEPQNDNEGETSLATTQMN) show a composition bias toward polar residues.

Belongs to the PRR23 family.

This Homo sapiens (Human) protein is Proline-rich protein 23D1 (PRR23D1).